A 65-amino-acid chain; its full sequence is Conotoxin mr5.1b (65 aa).

An N-terminal signal peptide occupies residues 1 to 19 (MRCVPVFVILLLLIASAPS). A propeptide spanning residues 20–48 (VDARLKTKDDMPLPSSHANIKRTLQMLRN) is cleaved from the precursor. At E60 the chain carries 4-carboxyglutamate.

The protein belongs to the conotoxin T superfamily. In terms of processing, contains 2 disulfide bonds that can be either 'C1-C3, C2-C4' or 'C1-C4, C2-C3', since these disulfide connectivities have been observed for conotoxins with cysteine framework V (for examples, see AC P0DQQ7 and AC P81755). As to expression, expressed by the venom duct.

It is found in the secreted. This Conus marmoreus (Marble cone) protein is Conotoxin mr5.1b.